A 375-amino-acid chain; its full sequence is MGLSRIAFTNLRNISSLKLDTSARLLLFHGNNGSGKSSLLEGVYLLGRGASFRTKELDYAVSHLSDEMVCFGEAVNEDAGKSFRIGVSRQKTGKLTRVRINGESARTLSELAAALPILIVTPDTFGFINGGPGERRRFVDWGVFHVEHQFKVVWQNWRKLLLQRNKLLKSGNISRSELSAWDNQYVAYSDEISRYRDAYFAELKEILIESLKESSEQTRDIGDKLTITLSNGWYQNDVNHMDQLASSVESDVKKGFTTLGPHRADIKVKVGGVHAKEVLSRGQQKTLITHLYLSQLEILRRRTNQRPIVLIDDVGAELDTGNQVTLLTRMLEKGAQVFVTVLDKQQSEYLFGHFNQEYDTQMFHVEQGAVTKVHN.

Position 30 to 37 (G30 to S37) interacts with ATP.

It belongs to the RecF family.

It localises to the cytoplasm. The RecF protein is involved in DNA metabolism; it is required for DNA replication and normal SOS inducibility. RecF binds preferentially to single-stranded, linear DNA. It also seems to bind ATP. The protein is DNA replication and repair protein RecF of Hahella chejuensis (strain KCTC 2396).